Reading from the N-terminus, the 284-residue chain is Tropomyosin alpha-1 chain (284 aa).

The disordered stretch occupies residues 1 to 40 (MDAIKKKMQMLKLDKENALDRAEQAEADKKGAEDKSKQLE). Residues 1–284 (MDAIKKKMQM…DHALNDMTSI (284 aa)) are a coiled coil. The segment covering 12 to 40 (KLDKENALDRAEQAEADKKGAEDKSKQLE) has biased composition (basic and acidic residues).

This sequence belongs to the tropomyosin family. Homodimer. Heterodimer of an alpha (TPM1, TPM3 or TPM4) and a beta (TPM2) chain.

Its subcellular location is the cytoplasm. It localises to the cytoskeleton. Binds to actin filaments in muscle and non-muscle cells. Plays a central role, in association with the troponin complex, in the calcium dependent regulation of vertebrate striated muscle contraction. Smooth muscle contraction is regulated by interaction with caldesmon. In non-muscle cells is implicated in stabilizing cytoskeleton actin filaments. This is Tropomyosin alpha-1 chain (tpm1) from Rana temporaria (European common frog).